A 252-amino-acid chain; its full sequence is 2-succinyl-6-hydroxy-2,4-cyclohexadiene-1-carboxylate synthase (252 aa).

The protein belongs to the AB hydrolase superfamily. MenH family. In terms of assembly, monomer.

The catalysed reaction is 5-enolpyruvoyl-6-hydroxy-2-succinyl-cyclohex-3-ene-1-carboxylate = (1R,6R)-6-hydroxy-2-succinyl-cyclohexa-2,4-diene-1-carboxylate + pyruvate. It functions in the pathway quinol/quinone metabolism; 1,4-dihydroxy-2-naphthoate biosynthesis; 1,4-dihydroxy-2-naphthoate from chorismate: step 3/7. It participates in quinol/quinone metabolism; menaquinone biosynthesis. Its function is as follows. Catalyzes a proton abstraction reaction that results in 2,5-elimination of pyruvate from 2-succinyl-5-enolpyruvyl-6-hydroxy-3-cyclohexene-1-carboxylate (SEPHCHC) and the formation of 2-succinyl-6-hydroxy-2,4-cyclohexadiene-1-carboxylate (SHCHC). The sequence is that of 2-succinyl-6-hydroxy-2,4-cyclohexadiene-1-carboxylate synthase from Escherichia coli O157:H7.